We begin with the raw amino-acid sequence, 182 residues long: MSKFYDPSQPEQSYDSPKLFGIIPIKFIVSFLQLVSIVSQILWLYSENDKIYLVLLSVGIVLNVFTVVVFIKEHKLLMRAHYYSALIFTVVPFIYAVYTFISFIELFFGDKDITFNQCSPFAYAFIFLCIYIFYLAMCRVLIKASEFQPDDMPDLDTTQGLFHYNRDAYDGGERAKLMYGEV.

4 consecutive transmembrane segments (helical) span residues 19–39 (LFGI…SIVS), 51–71 (IYLV…VVFI), 87–107 (IFTV…IELF), and 118–138 (CSPF…LAMC).

The protein localises to the membrane. This is an uncharacterized protein from Caenorhabditis elegans.